The chain runs to 238 residues: Probable transcriptional regulatory protein MGAS10750_Spy0264 (238 aa).

This sequence belongs to the TACO1 family. YeeN subfamily.

The protein resides in the cytoplasm. This Streptococcus pyogenes serotype M4 (strain MGAS10750) protein is Probable transcriptional regulatory protein MGAS10750_Spy0264.